The sequence spans 351 residues: Rhodopsin (351 aa).

Residues 1-36 (MNGTEGPYFYVPMVNTTGVVRSPYEYPQYYLVNPAA) are Extracellular-facing. N-linked (GlcNAc...) asparagine glycosylation is found at asparagine 2 and asparagine 15. The helical transmembrane segment at 37 to 61 (FAVLGAYMFFLIIFGFPINFLTLYV) threads the bilayer. The Cytoplasmic segment spans residues 62-73 (TLEHKKLRTPLN). Residues 74–96 (YILLNLAVADLFMVIGGFTTTMY) traverse the membrane as a helical segment. The Extracellular portion of the chain corresponds to 97-110 (SSMHGYFVLGRLGC). A disulfide bridge connects residues cysteine 110 and cysteine 187. The helical transmembrane segment at 111 to 133 (NLEGFSATLGGMISLWSLAVLAI) threads the bilayer. A 'Ionic lock' involved in activated form stabilization motif is present at residues 134–136 (ERW). Over 134–152 (ERWVVVCKPTSNFRFGENH) the chain is Cytoplasmic. A helical transmembrane segment spans residues 153–173 (AIMGVSLTWTMALACTVPPLV). The Extracellular portion of the chain corresponds to 174–202 (GWSRYIPEGMQCSCGIDYYTRAEGFNNES). A glycan (N-linked (GlcNAc...) asparagine) is linked at asparagine 200. A helical transmembrane segment spans residues 203–224 (FVLYMFFCHFMVPLIIIFFCYG). The Cytoplasmic segment spans residues 225 to 252 (RLLCAVKEAAAAQQESETTQRAEREVTR). Residues 253-274 (MVILMVIGYLVCWLPYASVAWF) traverse the membrane as a helical segment. At 275 to 286 (IFTHQGSEFGPL) the chain is on the extracellular side. The chain crosses the membrane as a helical span at residues 287–308 (FMTIPAFFAKSSSIYNPVIYIC). Lysine 296 bears the N6-(retinylidene)lysine mark. At 309-351 (MNKQFRNCMITTLFCGKNPFEGEEEGASSTKTEASSASSVSPA) the chain is on the cytoplasmic side. Residue cysteine 323 is the site of S-palmitoyl cysteine attachment. The disordered stretch occupies residues 330–351 (GEEEGASSTKTEASSASSVSPA). Positions 335 to 351 (ASSTKTEASSASSVSPA) are enriched in low complexity.

This sequence belongs to the G-protein coupled receptor 1 family. Opsin subfamily. Post-translationally, phosphorylated on some or all of the serine and threonine residues present in the C-terminal region. In terms of processing, contains one covalently linked retinal chromophore.

It localises to the membrane. The protein resides in the cell projection. It is found in the cilium. Its subcellular location is the photoreceptor outer segment. Functionally, photoreceptor required for image-forming vision at low light intensity. While most salt water fish species use retinal as chromophore, most freshwater fish use 3-dehydroretinal, or a mixture of retinal and 3-dehydroretinal. Light-induced isomerization of 11-cis to all-trans retinal triggers a conformational change that activates signaling via G-proteins. Subsequent receptor phosphorylation mediates displacement of the bound G-protein alpha subunit by arrestin and terminates signaling. This chain is Rhodopsin (rho), found in Neoniphon sammara (Spotfin squirrelfish).